Reading from the N-terminus, the 117-residue chain is Mini-circle uncharacterized 12.9 kDa protein (117 aa).

The protein is Mini-circle uncharacterized 12.9 kDa protein of Streptomyces coelicolor (strain ATCC BAA-471 / A3(2) / M145).